The following is a 316-amino-acid chain: Transaldolase (316 aa).

Lys131 acts as the Schiff-base intermediate with substrate in catalysis.

Belongs to the transaldolase family. Type 1 subfamily. As to quaternary structure, homodimer.

The protein resides in the cytoplasm. The catalysed reaction is D-sedoheptulose 7-phosphate + D-glyceraldehyde 3-phosphate = D-erythrose 4-phosphate + beta-D-fructose 6-phosphate. It participates in carbohydrate degradation; pentose phosphate pathway; D-glyceraldehyde 3-phosphate and beta-D-fructose 6-phosphate from D-ribose 5-phosphate and D-xylulose 5-phosphate (non-oxidative stage): step 2/3. Transaldolase is important for the balance of metabolites in the pentose-phosphate pathway. In Sodalis glossinidius (strain morsitans), this protein is Transaldolase.